The following is a 1522-amino-acid chain: Myosin-15 (1522 aa).

The Myosin N-terminal SH3-like domain maps to 12–61 (RKGDKVWVEDKDLAWIAADVLDSFDNKLHVETSTGKKVFVSPEKLFRRDP). One can recognise a Myosin motor domain in the interval 67-737 (NGVDDMTKLT…QIGILDSRRA (671 aa)). Residues 161 to 168 (GESGAGKT) and 214 to 222 (NDNSSRFGK) each bind ATP. Actin-binding regions lie at residues 499–533 (LIEK…FQNF), 535–558 (FHPR…AGKV), 593–618 (FPSA…KQQL), and 618–640 (LQAL…KPNS). IQ domains are found at residues 763-792 (ARAS…AAAA), 788-817 (NAAA…AAIV), 811-840 (LVSA…HRAA), 836-865 (EHRA…SIIA), and 859-888 (RQSS…VANE). Positions 889-1059 (AGALRLAKTK…NQVLMQKTLI (171 aa)) form a coiled coil. Positions 1164-1456 (NIIIEGINEA…VSQMRVLVDK (293 aa)) constitute a Dilute domain.

The protein belongs to the TRAFAC class myosin-kinesin ATPase superfamily. Myosin family. Plant myosin class XI subfamily. In terms of assembly, homodimer. Interacts with MYOB1 and MYOB7. Interacts with WIT1 and WIT2. Core component of the LINC complex which is composed of inner nuclear membrane SUN domain-containing proteins coupled to outer nuclear membrane WIP and WIT proteins. The LINC complex also involves nucleoskeletal proteins CRWN/LINC and possibly KAKU4 and the cytoskeletal myosin KAKU1.

The protein resides in the cytoplasm. Its subcellular location is the nucleus membrane. Functionally, myosin heavy chain that is required for the cell cycle-regulated transport of various organelles and proteins for their segregation. Functions by binding with its tail domain to receptor proteins on organelles and exerting force with its N-terminal motor domain against actin filaments, thereby transporting its cargo along polarized actin cables. Involved in trafficking of Golgi stacks and mitochondria. Plays a role in nuclear shape determination. Drives nuclear movement along actin filaments. As component of the SUN-WIP-WIT2-KAKU1 complex, mediates the transfer of cytoplasmic forces to the nuclear envelope (NE), leading to nuclear shape changes. This Arabidopsis thaliana (Mouse-ear cress) protein is Myosin-15 (XI-I).